Here is a 256-residue protein sequence, read N- to C-terminus: tRNA (guanine-N(7)-)-methyltransferase (256 aa).

Residues 1 to 25 (MVATGGQAQDQSQNQEPDVLNPTSA) are disordered. Residues G79, 102-103 (EI), 137-138 (NA), and L157 each bind S-adenosyl-L-methionine. D160 is an active-site residue. 235–237 (SEE) is an S-adenosyl-L-methionine binding site.

The protein belongs to the class I-like SAM-binding methyltransferase superfamily. TrmB family.

The protein resides in the nucleus. It carries out the reaction guanosine(46) in tRNA + S-adenosyl-L-methionine = N(7)-methylguanosine(46) in tRNA + S-adenosyl-L-homocysteine. It functions in the pathway tRNA modification; N(7)-methylguanine-tRNA biosynthesis. Catalyzes the formation of N(7)-methylguanine at position 46 (m7G46) in tRNA. This Drosophila simulans (Fruit fly) protein is tRNA (guanine-N(7)-)-methyltransferase.